A 122-amino-acid polypeptide reads, in one-letter code: Histone H2B (122 aa).

Positions 1 to 31 are disordered; that stretch reads MPPKPSGKGQKKAGKAKGAPSTNKKRKRKRK. N,N-dimethylproline is present on Pro-2. Gln-10 is covalently cross-linked (Isoglutamyl lysine isopeptide (Gln-Lys) (interchain with K-5 in histone H4)). Ser-109 carries O-linked (GlcNAc) serine glycosylation. Lys-117 is covalently cross-linked (Glycyl lysine isopeptide (Lys-Gly) (interchain with G-Cter in ubiquitin)).

Belongs to the histone H2B family. In terms of assembly, the nucleosome is a histone octamer containing two molecules each of H2A, H2B, H3 and H4 assembled in one H3-H4 heterotetramer and two H2A-H2B heterodimers. The octamer wraps approximately 147 bp of DNA. Post-translationally, monoubiquitination of Lys-117 gives a specific tag for epigenetic transcriptional activation and is also prerequisite for histone H3 'Lys-4' and 'Lys-79' methylation. In terms of processing, glcNAcylation at Ser-109 promotes monoubiquitination of Lys-117. It fluctuates in response to extracellular glucose, and associates with transcribed genes.

It is found in the nucleus. The protein localises to the chromosome. Its function is as follows. Core component of nucleosome. Nucleosomes wrap and compact DNA into chromatin, limiting DNA accessibility to the cellular machineries which require DNA as a template. Histones thereby play a central role in transcription regulation, DNA repair, DNA replication and chromosomal stability. DNA accessibility is regulated via a complex set of post-translational modifications of histones, also called histone code, and nucleosome remodeling. The chain is Histone H2B from Patiria pectinifera (Starfish).